Consider the following 259-residue polypeptide: GTP-binding protein RHO4 (259 aa).

59–66 provides a ligand contact to GTP; sequence GDGATGKT. Residues 81-89 carry the Effector region motif; it reads YVPTIFENY. GTP is bound by residues 107–111 and 165–168; these read DTAGQ and LKSD. The residue at position 256 (Cys-256) is a Cysteine methyl ester. Cys-256 carries S-geranylgeranyl cysteine lipidation. A propeptide spans 257–259 (removed in mature form); it reads VVL.

This sequence belongs to the small GTPase superfamily. Rho family.

The protein localises to the cell membrane. The chain is GTP-binding protein RHO4 (RHO4) from Eremothecium gossypii (strain ATCC 10895 / CBS 109.51 / FGSC 9923 / NRRL Y-1056) (Yeast).